We begin with the raw amino-acid sequence, 495 residues long: Cardiolipin synthase A (495 aa).

2 helical membrane passes run 9-29 (IEVLFVIIKWILLLGYWWLIT) and 46-66 (MAWLLIIYVVPFIGAIIYLLL). 2 consecutive PLD phosphodiesterase domains span residues 227–254 (MDLRQHRKMILIDNYIGYTGSMNMIDPK) and 408–435 (EGGLLHTKSILVDDQLSLVGTVNLDMRS). Catalysis depends on residues His-232, Lys-234, Asp-239, His-413, Lys-415, and Asp-420.

Belongs to the phospholipase D family. Cardiolipin synthase subfamily. ClsA sub-subfamily.

It localises to the cell membrane. The enzyme catalyses 2 a 1,2-diacyl-sn-glycero-3-phospho-(1'-sn-glycerol) = a cardiolipin + glycerol. Catalyzes the reversible phosphatidyl group transfer from one phosphatidylglycerol molecule to another to form cardiolipin (CL) (diphosphatidylglycerol) and glycerol. The protein is Cardiolipin synthase A of Wigglesworthia glossinidia brevipalpis.